A 1115-amino-acid chain; its full sequence is Scavenger receptor cysteine-rich type 1 protein M130 (1115 aa).

The N-terminal stretch at 1-46 is a signal peptide; that stretch reads MDKLRMVLHENSGSADFRRCSAHLSSFTFAVVAVLSACLVTSSLGG. Residues 47–1044 are Extracellular-facing; sequence KDKELRLTGG…ESLHATGRSS (998 aa). SRCR domains follow at residues 51–151, 158–258, 265–365, 372–472, 477–577, 582–682, 718–818, 823–925, and 928–1028; these read LRLT…VTCS, MGLV…VICL, LRVV…VTCS, LRLK…ITCS, PRLV…VVCS, IRLV…VICS, LRLV…VICS, LRLI…ITCA, and IRLQ…VTCS. Disulfide bonds link Cys76–Cys140, Cys89–Cys150, Cys120–Cys130, Cys183–Cys247, Cys196–Cys257, Cys227–Cys237, Cys290–Cys354, Cys303–Cys364, Cys334–Cys344, Cys397–Cys461, Cys410–Cys471, Cys441–Cys451, Cys502–Cys566, Cys515–Cys576, Cys546–Cys556, Cys607–Cys671, Cys620–Cys681, Cys651–Cys661, Cys743–Cys807, Cys756–Cys817, Cys787–Cys797, Cys863–Cys924, and Cys894–Cys904. Asn105 carries an N-linked (GlcNAc...) asparagine glycan. Asn139 carries an N-linked (GlcNAc...) asparagine glycan. Asn936 carries N-linked (GlcNAc...) asparagine glycosylation. 3 cysteine pairs are disulfide-bonded: Cys953/Cys1017, Cys966/Cys1027, and Cys997/Cys1007. A helical transmembrane segment spans residues 1045–1065; sequence FVALAIFGVILLACLIAFLIW. The Cytoplasmic portion of the chain corresponds to 1066–1115; it reads TQKRRQRQRLSVFSGGENSVHQIQYREMNSCLKADETDMLNPSGDHSEVQ. An Internalization signal motif is present at residues 1090-1093; it reads YREM.

In terms of assembly, interacts with CSNK2B. Post-translationally, a soluble form (sCD163) is produced by proteolytic shedding which can be induced by lipopolysaccharide, phorbol ester and Fc region of immunoglobulin gamma. This cleavage is dependent on protein kinase C and tyrosine kinases and can be blocked by protease inhibitors. The shedding is inhibited by the tissue inhibitor of metalloproteinase TIMP3, and thus probably induced by membrane-bound metalloproteinases ADAMs. Phosphorylated. Expressed in monocytes and macrophages. Detected only in one population of monocytes (CD163+) which is in advanced maturation stage.

It localises to the secreted. The protein resides in the cell membrane. Functionally, involved in clearance and endocytosis of hemoglobin/haptoglobin complexes by macrophages and may thereby protect tissues from free hemoglobin-mediated oxidative damage. May play a role in the uptake and recycling of iron, via endocytosis of hemoglobin/haptoglobin and subsequent breakdown of heme. Binds hemoglobin/haptoglobin complexes in a calcium-dependent and pH-dependent manner. Induces a cascade of intracellular signals that involves tyrosine kinase-dependent calcium mobilization, inositol triphosphate production and secretion of IL6 and CSF1. May play a role in the process of infection of porcine monocytes/macrophages by African swine fever virus (ASFV). In case of porcine reproductive and respiratory syndrome virus (PRRSV), serves mediates virion attachment and plays a role in viral entry. In terms of biological role, after shedding, the soluble form (sCD163) may play an anti-inflammatory role. The chain is Scavenger receptor cysteine-rich type 1 protein M130 (CD163) from Sus scrofa (Pig).